A 505-amino-acid polypeptide reads, in one-letter code: Deoxyguanosinetriphosphate triphosphohydrolase (505 aa).

The HD domain maps to 66–273; that stretch reads RLTHSLEVQQ…MEAADDISYC (208 aa).

The protein belongs to the dGTPase family. Type 1 subfamily. Homotetramer. Requires Mg(2+) as cofactor.

The catalysed reaction is dGTP + H2O = 2'-deoxyguanosine + triphosphate + H(+). Functionally, dGTPase preferentially hydrolyzes dGTP over the other canonical NTPs. This Yersinia enterocolitica serotype O:8 / biotype 1B (strain NCTC 13174 / 8081) protein is Deoxyguanosinetriphosphate triphosphohydrolase.